The following is a 308-amino-acid chain: Aspartate carbamoyltransferase catalytic subunit (308 aa).

Positions 57 and 58 each coordinate carbamoyl phosphate. An L-aspartate-binding site is contributed by Lys86. Positions 107, 135, and 138 each coordinate carbamoyl phosphate. L-aspartate contacts are provided by Arg168 and Arg229. Residues Leu268 and Pro269 each coordinate carbamoyl phosphate.

It belongs to the aspartate/ornithine carbamoyltransferase superfamily. ATCase family. As to quaternary structure, heterooligomer of catalytic and regulatory chains.

The enzyme catalyses carbamoyl phosphate + L-aspartate = N-carbamoyl-L-aspartate + phosphate + H(+). It participates in pyrimidine metabolism; UMP biosynthesis via de novo pathway; (S)-dihydroorotate from bicarbonate: step 2/3. In terms of biological role, catalyzes the condensation of carbamoyl phosphate and aspartate to form carbamoyl aspartate and inorganic phosphate, the committed step in the de novo pyrimidine nucleotide biosynthesis pathway. The protein is Aspartate carbamoyltransferase catalytic subunit of Thermococcus gammatolerans (strain DSM 15229 / JCM 11827 / EJ3).